The chain runs to 252 residues: Membrane protein insertase YidC (252 aa).

An N-terminal signal peptide occupies residues 1-20; it reads MRKKFGIIVALIALTTLLSG. C21 carries N-palmitoyl cysteine lipidation. Residue C21 is the site of S-diacylglycerol cysteine attachment. The next 5 helical transmembrane spans lie at 59-79, 129-149, 160-180, 206-226, and 228-248; these read YGLA…PLNV, LAGC…YHAI, FLWF…GLFT, IMLY…PAAL, and LYWV…NKPM.

Belongs to the OXA1/ALB3/YidC family. Type 2 subfamily.

Its subcellular location is the cell membrane. Required for the insertion and/or proper folding and/or complex formation of integral membrane proteins into the membrane. Involved in integration of membrane proteins that insert both dependently and independently of the Sec translocase complex, as well as at least some lipoproteins. The sequence is that of Membrane protein insertase YidC from Oceanobacillus iheyensis (strain DSM 14371 / CIP 107618 / JCM 11309 / KCTC 3954 / HTE831).